The following is a 159-amino-acid chain: 2-C-methyl-D-erythritol 2,4-cyclodiphosphate synthase (159 aa).

Residues D8 and H10 each coordinate a divalent metal cation. 4-CDP-2-C-methyl-D-erythritol 2-phosphate-binding positions include 8–10 and 34–35; these read DVH and HS. H42 lines the a divalent metal cation pocket. Residues 56 to 58, 61 to 65, 100 to 106, 132 to 135, F139, and R142 each bind 4-CDP-2-C-methyl-D-erythritol 2-phosphate; these read DIG, FPDTD, AQAPKML, and TTTE.

The protein belongs to the IspF family. As to quaternary structure, homotrimer. The cofactor is a divalent metal cation.

The catalysed reaction is 4-CDP-2-C-methyl-D-erythritol 2-phosphate = 2-C-methyl-D-erythritol 2,4-cyclic diphosphate + CMP. It participates in isoprenoid biosynthesis; isopentenyl diphosphate biosynthesis via DXP pathway; isopentenyl diphosphate from 1-deoxy-D-xylulose 5-phosphate: step 4/6. In terms of biological role, involved in the biosynthesis of isopentenyl diphosphate (IPP) and dimethylallyl diphosphate (DMAPP), two major building blocks of isoprenoid compounds. Catalyzes the conversion of 4-diphosphocytidyl-2-C-methyl-D-erythritol 2-phosphate (CDP-ME2P) to 2-C-methyl-D-erythritol 2,4-cyclodiphosphate (ME-CPP) with a corresponding release of cytidine 5-monophosphate (CMP). The protein is 2-C-methyl-D-erythritol 2,4-cyclodiphosphate synthase of Salmonella arizonae (strain ATCC BAA-731 / CDC346-86 / RSK2980).